A 728-amino-acid polypeptide reads, in one-letter code: Double-strand break repair protein mre-11 (728 aa).

Positions 1–12 are enriched in acidic residues; the sequence is MCGSDDSFDDFV. The segment at 1–45 is disordered; that stretch reads MCGSDDSFDDFVPDSQEPASSRTRNQDHLDDDEVPCSQRPDAAND. Residues Asp-73, His-75, Asp-113, and Asn-181 each coordinate Mn(2+). The active-site Proton donor is His-182. Mn(2+)-binding residues include His-269, His-301, and His-303. Positions 601–728 are disordered; sequence KNPVADVEME…PSKKRDLSFF (128 aa). Residues 607-616 show a composition bias toward acidic residues; that stretch reads VEMEEDEDDP. The segment covering 622–632 has biased composition (polar residues); that stretch reads PQSTSRTNYAS. Positions 634–645 are enriched in acidic residues; it reads SEDEVANSDEEM.

The protein belongs to the MRE11/RAD32 family. As to quaternary structure, component of the MRN complex composed of two heterodimers rad-50 and mre-11 associated with a single nbs-1. It depends on Mn(2+) as a cofactor.

The protein localises to the nucleus. The protein resides in the chromosome. Functionally, core component of the MRN complex, which plays a central role in double-strand break (DSB) repair, DNA recombination, maintenance of telomere integrity and meiosis. The MRN complex is involved in the repair of DNA double-strand breaks (DSBs) via homologous recombination (HR), an error-free mechanism which primarily occurs during S and G2 phases. The complex (1) mediates the end resection of damaged DNA, which generates proper single-stranded DNA, a key initial steps in HR, and is (2) required for the recruitment of other repair factors and efficient activation of ATM and ATR upon DNA damage. Within the MRN complex, mre-11 possesses both single-strand endonuclease activity and double-strand-specific 3'-5' exonuclease activity. Mre-11 first endonucleolytically cleaves the 5' strand at DNA DSB ends to prevent non-homologous end joining (NHEJ) and licence HR. It then generates a single-stranded DNA gap via 3' to 5' exonucleolytic degradation, which is required for single-strand invasion and recombination. Required for meiotic crossing over and chiasma formation. Pachytene morphology and homolog pairing are normal. Vital in long term for maintenance of reproductive capacity of subsequent generations. This chain is Double-strand break repair protein mre-11, found in Caenorhabditis elegans.